A 317-amino-acid polypeptide reads, in one-letter code: Zinc transporter ZIP3 (317 aa).

Residues 1–3 (MSQ) lie on the Extracellular side of the membrane. A helical membrane pass occupies residues 4–24 (LLVAKVLCMVGVFFFMLLGSL). The Cytoplasmic portion of the chain corresponds to 25-42 (LPVKVIEADFEKAHRSKK). A helical membrane pass occupies residues 43–63 (VLSLCNTFGGGVFLATCFNAL). At 64 to 85 (LPAVRDKLQQVLSLGHISTDYP) the chain is on the extracellular side. The chain crosses the membrane as a helical span at residues 86 to 106 (LAETLMMVGFFLTVFVEQLVL). Residues 107–172 (TFRRERPPFI…RELGRPGPLR (66 aa)) are Cytoplasmic-facing. Residues S125 and S129 each carry the phosphoserine modification. Residues 173-193 (LLSLVFALSAHSVFEGLALGL) form a helical membrane-spanning segment. At 194–199 (QEEGER) the chain is on the extracellular side. A helical membrane pass occupies residues 200–220 (VVSLFVGVAVHETLVAVALGI). The Cytoplasmic segment spans residues 221–232 (SMARSAVPLRDA). A helical transmembrane segment spans residues 233-253 (AKLAVTVSAMIPVGIGLGLGI). At 254–265 (ESARSVASSVAS) the chain is on the extracellular side. Residues 266 to 286 (ALLQGLAGGTFLFVTFLEILA) form a helical membrane-spanning segment. The Cytoplasmic portion of the chain corresponds to 287–294 (KELEERSE). The helical transmembrane segment at 295-315 (QLLKVLFLVLGYAVLAGMVFL) threads the bilayer. Residues 316–317 (KW) are Extracellular-facing.

The protein belongs to the ZIP transporter (TC 2.A.5) family.

The protein resides in the cell membrane. It localises to the apical cell membrane. It carries out the reaction Zn(2+)(in) = Zn(2+)(out). In terms of biological role, transporter for the divalent cation Zn(2+). Mediates the influx of Zn(2+) into cells from extracellular space. Controls Zn(2+) accumulation into dentate gyrus granule cells in the hippocampus. Mediates Zn(2+) reuptake from the secreted milk within the alveolar lumen. The chain is Zinc transporter ZIP3 (Slc39a3) from Rattus norvegicus (Rat).